Here is a 473-residue protein sequence, read N- to C-terminus: Cannabinoid receptor 1 (473 aa).

Topologically, residues 1–121 are extracellular; it reads MKSILDGLAD…LNPSQQLAIA (121 aa). The required for mitochondrial localization stretch occupies residues 2–23; that stretch reads KSILDGLADTTFRTITTDLLYV. N-linked (GlcNAc...) asparagine glycans are attached at residues Asn78 and Asn84. The helical transmembrane segment at 122-142 threads the bilayer; it reads VLSLTLGTFTVLENLLVLCVI. The Cytoplasmic portion of the chain corresponds to 143–155; sequence LHSRSLRCRPSYH. A helical transmembrane segment spans residues 156 to 176; that stretch reads FIGSLAVADLLGSVIFVYSFV. Residues 177–188 lie on the Extracellular side of the membrane; that stretch reads DFHVFHRKDSPN. A helical transmembrane segment spans residues 189-209; the sequence is VFLFKLGGVTASFTASVGSLF. The Cytoplasmic segment spans residues 210-233; it reads LTAIDRYISIHRPLAYKRIVTRPK. A helical transmembrane segment spans residues 234–254; the sequence is AVVAFCLMWTIAIVIAVLPLL. At 255–278 the chain is on the extracellular side; the sequence is GWNCKKLQSVCSDIFPLIDETYLM. The chain crosses the membrane as a helical span at residues 279-299; sequence FWIGVTSVLLLFIVYAYMYIL. Residues 300–345 lie on the Cytoplasmic side of the membrane; it reads WKAHSHAVRMIQRGTQKSIIIHTSEDGKVQVTRPDQARMDIRLAKT. Residues 346–366 traverse the membrane as a helical segment; that stretch reads LVLILVVLIICWGPLLAIMVY. The Extracellular segment spans residues 367-378; that stretch reads DVFGKMNKLIKT. Residues 379–399 traverse the membrane as a helical segment; it reads VFAFCSMLCLLNSTVNPIIYA. Residues 400–473 are Cytoplasmic-facing; that stretch reads LRSKDLRHAF…VSTDTSAEAL (74 aa). The S-palmitoyl cysteine moiety is linked to residue Cys416. 2 positions are modified to phosphoserine: Ser426 and Ser430.

Belongs to the G-protein coupled receptor 1 family. As to quaternary structure, interacts (via C-terminus) with CNRIP1. Associates with G protein alpha subunits, including G(i) alpha-1/GNAI1, G(i) alpha-3/GNAI3 and G(o)-alpha/GNAO1; palmitoylation is important for interaction with GNAI3 and GNAO1. Palmitoylation at Cys-416 is important for recruitment at both plasma membrane and lipid rafts and association with G protein alpha subunits. In terms of tissue distribution, expressed in brain neurons (at protein level). Detected throughout the striatum, cortex and hippocampus, with highest levels in the lateral striatum. In rostral brain regions, high expression levels in the dorsal lateral striatum, while in the caudal brain regions, high levels are observed in the ventral lateral striatum. Expressed in neurons. In the hypothalamus, expressed in both GABAergic and glutamatergic presynaptic terminals of POMC neurons (at protein level). Expressed in striated muscles, including skeletal muscles (gastrocnemius and rectus abdominis) and myocardium (at protein level). Expressed in the liver, with highest levels in Kupffer cells and lower levels in endothelial cells as well as hepatocytes, particularly in perivascular areas (at protein level). The hepatic expression level is up-regulated in obese mice compared to lean animals.

Its subcellular location is the cell membrane. The protein resides in the mitochondrion outer membrane. The protein localises to the cell projection. It localises to the axon. It is found in the presynapse. Its activity is regulated as follows. Hemopressin, a peptide derived from hemoglobin subunit alpha (HBA1 and/or HBA2), acts as an antagonist peptide: hemopressin-binding efficiently blocks cannabinoid receptor CNR1 and subsequent signaling. In terms of biological role, G-protein coupled receptor for cannabinoids, including endocannabinoids (eCBs), such as N-arachidonoylethanolamide (also called anandamide or AEA) and 2-arachidonoylglycerol (2-AG). Mediates many cannabinoid-induced effects, acting, among others, on food intake, memory loss, gastrointestinal motility, catalepsy, ambulatory activity, anxiety, chronic pain. Signaling typically involves reduction in cyclic AMP. In the hypothalamus, may have a dual effect on mitochondrial respiration depending upon the agonist dose and possibly upon the cell type. Increases respiration at low doses, while decreases respiration at high doses. At high doses, CNR1 signal transduction involves G-protein alpha-i protein activation and subsequent inhibition of mitochondrial soluble adenylate cyclase, decrease in cyclic AMP concentration, inhibition of protein kinase A (PKA)-dependent phosphorylation of specific subunits of the mitochondrial electron transport system, including NDUFS2. In the hypothalamus, inhibits leptin-induced reactive oxygen species (ROS) formation and mediates cannabinoid-induced increase in SREBF1 and FASN gene expression. In response to cannabinoids, drives the release of orexigenic beta-endorphin, but not that of melanocyte-stimulating hormone alpha/alpha-MSH, from hypothalamic POMC neurons, hence promoting food intake. In the hippocampus, regulates cellular respiration and energy production in response to cannabinoids. Involved in cannabinoid-dependent depolarization-induced suppression of inhibition (DSI), a process in which depolarization of CA1 postsynaptic pyramidal neurons mobilizes eCBs, which retrogradely activate presynaptic CB1 receptors, transiently decreasing GABAergic inhibitory neurotransmission. Also reduces excitatory synaptic transmission. In superior cervical ganglions and cerebral vascular smooth muscle cells, inhibits voltage-gated Ca(2+) channels in a constitutive, as well as agonist-dependent manner. In cerebral vascular smooth muscle cells, cannabinoid-induced inhibition of voltage-gated Ca(2+) channels leads to vasodilation and decreased vascular tone. Induces leptin production in adipocytes and reduces LRP2-mediated leptin clearance in the kidney, hence participating in hyperleptinemia. In adipose tissue, CNR1 signaling leads to increased expression of SREBF1, ACACA and FASN genes. In the liver, activation by endocannabinoids leads to increased de novo lipogenesis and reduced fatty acid catabolism, associated with increased expression of SREBF1/SREBP-1, GCK, ACACA, ACACB and FASN genes. May also affect de novo cholesterol synthesis and HDL-cholesteryl ether uptake. Peripherally modulates energy metabolism. In high carbohydrate diet-induced obesity, may decrease the expression of mitochondrial dihydrolipoyl dehydrogenase/DLD in striated muscles, as well as that of selected glucose/ pyruvate metabolic enzymes, hence affecting energy expenditure through mitochondrial metabolism. In response to cannabinoid anandamide, elicits a pro-inflammatory response in macrophages, which involves NLRP3 inflammasome activation and IL1B and IL18 secretion. In macrophages infiltrating pancreatic islets, this process may participate in the progression of type-2 diabetes and associated loss of pancreatic beta-cells. The polypeptide is Cannabinoid receptor 1 (Cnr1) (Mus musculus (Mouse)).